We begin with the raw amino-acid sequence, 121 residues long: Autophagy-related protein 8f (121 aa).

G117 is lipidated: Phosphatidylethanolamine amidated glycine. Residues 118 to 121 (FGSP) constitute a propeptide, removed in mature form.

It belongs to the ATG8 family. In terms of assembly, interacts with ATG4. Interacts with NBR1. Interacts with ATI1 and ATI2. Interacts with SH3P2. In terms of processing, the C-terminal 4 residues are removed by ATG4 to expose Gly-117 at the C-terminus. This Gly-117 forms then a thioester bond with the 'Cys-558' of ATG7 (E1-like activating enzyme) before being transferred to the 'Cys-258' of ATG3 (the specific E2 conjugating enzyme), in order to be finally amidated with phosphatidylethanolamine. This lipid modification anchors ATG8 to autophagosomes. In terms of tissue distribution, constitutively expressed.

Its subcellular location is the cytoplasmic vesicle. It is found in the autophagosome membrane. The protein resides in the vacuole membrane. It localises to the cytoplasm. The protein localises to the cytoskeleton. Functionally, ubiquitin-like modifier involved in autophagosomes formation. May mediate the delivery of the autophagosomes to the vacuole via the microtubule cytoskeleton. The protein is Autophagy-related protein 8f (ATG8F) of Arabidopsis thaliana (Mouse-ear cress).